Consider the following 523-residue polypeptide: 2-isopropylmalate synthase (523 aa).

A Pyruvate carboxyltransferase domain is found at 5–267; the sequence is VIIFDTTLRD…HTAINHQEIW (263 aa). Aspartate 14, histidine 202, histidine 204, and asparagine 238 together coordinate Mn(2+). The segment at 392–523 is regulatory domain; that stretch reads RLDYFSVQSG…QHNENNKETV (132 aa).

It belongs to the alpha-IPM synthase/homocitrate synthase family. LeuA type 1 subfamily. Homodimer. Requires Mn(2+) as cofactor.

It is found in the cytoplasm. It carries out the reaction 3-methyl-2-oxobutanoate + acetyl-CoA + H2O = (2S)-2-isopropylmalate + CoA + H(+). Its pathway is amino-acid biosynthesis; L-leucine biosynthesis; L-leucine from 3-methyl-2-oxobutanoate: step 1/4. In terms of biological role, catalyzes the condensation of the acetyl group of acetyl-CoA with 3-methyl-2-oxobutanoate (2-ketoisovalerate) to form 3-carboxy-3-hydroxy-4-methylpentanoate (2-isopropylmalate). In Shigella flexneri, this protein is 2-isopropylmalate synthase.